Here is a 139-residue protein sequence, read N- to C-terminus: Large ribosomal subunit protein uL16 (139 aa).

Over residues 1 to 16 (MLIPRRVKHRKQHHPG) the composition is skewed to basic residues. Positions 1-25 (MLIPRRVKHRKQHHPGRSGQATGGT) are disordered.

This sequence belongs to the universal ribosomal protein uL16 family. In terms of assembly, part of the 50S ribosomal subunit.

Binds 23S rRNA and is also seen to make contacts with the A and possibly P site tRNAs. The protein is Large ribosomal subunit protein uL16 of Leifsonia xyli subsp. xyli (strain CTCB07).